Reading from the N-terminus, the 836-residue chain is Zinc fingers and homeoboxes protein 2 (836 aa).

The disordered stretch occupies residues 24 to 58; the sequence is LEEADRAKDKGLGVPPSDVSKERWAAEPEPSSKES. Residues 27–77 form an interaction with EFNB1 region; it reads ADRAKDKGLGVPPSDVSKERWAAEPEPSSKESEVVEVRSVGESQSKKLQGG. A compositionally biased stretch (basic and acidic residues) spans 42–58; sequence VSKERWAAEPEPSSKES. C2H2-type zinc fingers lie at residues 78–101 and 110–133; these read YECK…DMQH and YVCA…SKFH. The tract at residues 168–210 is disordered; it reads SAPGSSDNDPGVSVGKTATVKTGKQKADAKKVPKKPDEAAPDN. Basic and acidic residues predominate over residues 192-210; that stretch reads QKADAKKVPKKPDEAAPDN. The interval 195 to 358 is required for homodimerization; that stretch reads DAKKVPKKPD…PAQLTPTKVS (164 aa). 4 consecutive DNA-binding regions (homeobox) follow at residues 263 to 324, 439 to 501, 530 to 591, and 628 to 690; these read NTTK…WSPE, TPAS…IVHI, AQKF…EQAV, and SPSS…TLSW. The interval 263-446 is required for repressor activity; the sequence is NTTKYNSALD…PLTPASDRKK (184 aa). The required for interaction with NFYA stretch occupies residues 263 to 497; that stretch reads NTTKYNSALD…SDHRYRCQRG (235 aa). Residues 317-446 are required for nuclear localization; that stretch reads HGISWSPEEV…PLTPASDRKK (130 aa). The disordered stretch occupies residues 404-442; that stretch reads GQKRPLVTPQAAPEPKRPHIAQVPEPPPKVANTPLTPAS. K455 is covalently cross-linked (Glycyl lysine isopeptide (Lys-Gly) (interchain with G-Cter in SUMO2)). Composition is skewed to basic and acidic residues over residues 700-709 and 730-746; these read SDDHGHDVAS and YAKD…EKLV. The interval 700–836 is disordered; the sequence is SDDHGHDVAS…DSTPAEAGQA (137 aa). A phosphoserine mark is found at S824 and S826.

This sequence belongs to the ZHX family. As to quaternary structure, homodimer (via homeobox domain 1). Heterodimer with ZHX1 (via homeobox domain 1). Heterodimer with ZHX3 (via homeobox domain 1). Heterodimerization with ZHX1 is not necessary for repressor activity. Interacts (via homeobox domain) with NFYA (via N-terminus). Interacts with EFNB1 intracellular domain peptide; the interaction enhances ZHX2 transcriptional repression activity.

The protein localises to the nucleus. In terms of biological role, acts as a transcriptional repressor. Represses the promoter activity of the CDC25C gene stimulated by NFYA. May play a role in retinal development where it regulates the composition of bipolar cell populations, by promoting differentiation of bipolar OFF-type cells. In the brain, may promote maintenance and suppress differentiation of neural progenitor cells in the developing cortex. This is Zinc fingers and homeoboxes protein 2 (Zhx2) from Rattus norvegicus (Rat).